The primary structure comprises 250 residues: Oil body-associated protein 2B (250 aa).

Residues 1-29 (MSSSDQNPAATPASSGPAEPSPPGRPTAV) form a disordered region. Over residues 8-18 (PAATPASSGPA) the composition is skewed to low complexity.

The protein belongs to the OBAP family.

This Zea mays (Maize) protein is Oil body-associated protein 2B.